The sequence spans 579 residues: Mitogen-activated protein kinase kinase kinase 7 (579 aa).

The interval 1-300 is interaction with MAPK8IP1; the sequence is MSTASAASSS…FPGADEPLQY (300 aa). One can recognise a Protein kinase domain in the interval 36–291; it reads IEVEEVVGRG…KIMTHLMRYF (256 aa). ATP is bound by residues 42–50 and K63; that span reads VGRGAFGVV. A Glycyl lysine isopeptide (Lys-Gly) (interchain with G-Cter in ubiquitin) cross-link involves residue K72. D156 acts as the Proton acceptor in catalysis. K158 is covalently cross-linked (Glycyl lysine isopeptide (Lys-Gly) (interchain with G-Cter in ubiquitin)). Residues T184 and T187 each carry the phosphothreonine; by autocatalysis modification. S192 is modified (phosphoserine; by autocatalysis). K209 is covalently cross-linked (Glycyl lysine isopeptide (Lys-Gly) (interchain with G-Cter in ubiquitin)). Disordered stretches follow at residues 301-338 and 354-391; these read PCQY…MEQV and KNQA…MSAD. Polar residues predominate over residues 306–338; that stretch reads DEGQSNSATSTGSFMDIASTNTSNKSDTNMEQV. Residues 361–375 show a composition bias toward low complexity; sequence SESGRLSLGASRGSS. Phosphoserine occurs at positions 367, 389, and 412. Polar residues predominate over residues 416–425; sequence LTVTGTEPGQ. The disordered stretch occupies residues 416–466; that stretch reads LTVTGTEPGQVSSRSSSPSVRMITTSGPTSEKPARSHPWTPDDSTDTNGSD. The segment covering 426–436 has biased composition (low complexity); sequence VSSRSSSPSVR. S428 is modified (phosphoserine).

This sequence belongs to the protein kinase superfamily. STE Ser/Thr protein kinase family. MAP kinase kinase kinase subfamily. In terms of assembly, can form homodimer. Binds both upstream activators and downstream substrates in multimolecular complexes. Interacts with TAB1/MAP3K7IP1, TAB2/MAP3K7IP2 and TAB3/MAP3K7IP3. Identified in the TRIKA2 complex composed of MAP3K7/TAK1, TAB1/MAP3K7IP1 and TAB2/MAP3K7IP2. Interacts with PPM1L and PPM1B/PP2CB. Interaction with PP2A and PPP6C leads to its repressed activity. Interacts with TRAF6 and TAB1/MAP3K7IP1; during IL-1 signaling. Interacts with TAOK1 and TAOK2; interaction with TAOK2 interferes with MAP3K7 interaction with IKKA, thus preventing NF-kappa-B activation. Interacts with DYNC2I2 (via WD domains). Interacts with CYLD and RBCK1. Interacts with TGFBR1; induces MAP3K7/TAK1 activation by TRAF6. Interacts with MAPK8IP1 and SMAD6. Interacts with isoform 1 of VRK2. Interacts with DAB2; the interaction is induced by TGF-beta stimulation and may mediate TGF-beta stimulated JNK activation. Interacts with TRIM5. Part of a complex containing ITCH, NDFIP1 and MAP3K7. Interacts with PLEKHM1 (via N- and C-terminus). Interacts with TRIM8. Found in a complex with SH3RF1, RAC2, MAP2K7/MKK7, MAPK8IP1/JIP1, MAPK8/JNK1 and MAPK9/JNK2. Interacts with SASH1. Interacts with RIPK1. Mg(2+) serves as cofactor. Association with TAB1/MAP3K7IP1 promotes autophosphorylation and subsequent activation. Association with TAB2/MAP3K7IP2, itself associated with free unanchored Lys-63 polyubiquitin chain, promotes autophosphorylation and subsequent activation of MAP3K7. Dephosphorylation at Thr-187 by PP2A and PPP6C leads to inactivation. In terms of processing, 'Lys-48'-linked polyubiquitination at Lys-72 is induced by TNFalpha, and leads to proteasomal degradation. Undergoes 'Lys-48'-linked polyubiquitination catalyzed by ITCH. 'Lys-63'-linked polyubiquitination at Lys-158 by TRIM8 does not lead to proteasomal degradation but contributes to autophosphorylation and activation. Deubiquitinated by CYLD, a protease that selectively cleaves 'Lys-63'-linked ubiquitin chains.Deubiquitinated by USP19; leading to negative regulation of TNF-alpha- and IL-1beta-triggered NF-kappa-B activation.

Its subcellular location is the cytoplasm. The protein resides in the cell membrane. It carries out the reaction L-seryl-[protein] + ATP = O-phospho-L-seryl-[protein] + ADP + H(+). The enzyme catalyses L-threonyl-[protein] + ATP = O-phospho-L-threonyl-[protein] + ADP + H(+). Its activity is regulated as follows. Activated by pro-inflammatory cytokines and in response to physical and chemical stresses, including osmotic stress, oxidative stress, arsenic and ultraviolet light irradiation. Activated by 'Lys-63'-linked polyubiquitination and by autophosphorylation. Association with TAB1/MAP3K7IP1 and TAB2/MAP3K7IP2 promotes activation through autophosphorylation, whereas PPM1B/PP2CB, PP2A and PPP6C dephosphorylation leads to inactivation. Ceramides are also able to activate MAP3K7/TAK1. Serine/threonine kinase which acts as an essential component of the MAP kinase signal transduction pathway. Plays an important role in the cascades of cellular responses evoked by changes in the environment. Mediates signal transduction of TRAF6, various cytokines including interleukin-1 (IL-1), transforming growth factor-beta (TGFB), TGFB-related factors like BMP2 and BMP4, toll-like receptors (TLR), tumor necrosis factor receptor CD40 and B-cell receptor (BCR). Once activated, acts as an upstream activator of the MKK/JNK signal transduction cascade and the p38 MAPK signal transduction cascade through the phosphorylation and activation of several MAP kinase kinases like MAP2K1/MEK1, MAP2K3/MKK3, MAP2K6/MKK6 and MAP2K7/MKK7. These MAP2Ks in turn activate p38 MAPKs and c-jun N-terminal kinases (JNKs); both p38 MAPK and JNK pathways control the transcription factors activator protein-1 (AP-1). Independently of MAP2Ks and p38 MAPKs, acts as a key activator of NF-kappa-B by promoting activation of the I-kappa-B-kinase (IKK) core complex. Mechanistically, recruited to polyubiquitin chains of RIPK2 and IKBKG/NEMO via TAB2/MAP3K7IP2 and TAB3/MAP3K7IP3, and catalyzes phosphorylation and activation of IKBKB/IKKB component of the IKK complex, leading to NF-kappa-B activation. In osmotic stress signaling, plays a major role in the activation of MAPK8/JNK1, but not that of NF-kappa-B. Promotes TRIM5 capsid-specific restriction activity. Phosphorylates RIPK1 at 'Ser-321' which positively regulates RIPK1 interaction with RIPK3 to promote necroptosis but negatively regulates RIPK1 kinase activity and its interaction with FADD to mediate apoptosis. Phosphorylates STING1 in response to cGAMP-activation, promoting association between STEEP1 and STING1 and STING1 translocation to COPII vesicles. The chain is Mitogen-activated protein kinase kinase kinase 7 (Map3k7) from Mus musculus (Mouse).